Consider the following 125-residue polypeptide: Cu-Zn superoxide dismutase-like protein (125 aa).

An intrachain disulfide couples cysteine 52 to cysteine 102.

This sequence belongs to the Cu-Zn superoxide dismutase family.

It is found in the host cytoplasm. In terms of biological role, virion protein with no enzymatic activity. The sequence is that of Cu-Zn superoxide dismutase-like protein from Camelpox virus (strain M-96).